We begin with the raw amino-acid sequence, 104 residues long: Probable quinol monooxygenase YgiN (104 aa).

In terms of domain architecture, ABM spans 2–100 (LTVIAEIRTR…DVLEMNIRIL (99 aa)).

As to quaternary structure, homodimer.

It catalyses the reaction menadiol + 2 O2 = menadione + 2 superoxide + 2 H(+). Its function is as follows. Can oxidize menadiol to menadione. The sequence is that of Probable quinol monooxygenase YgiN (ygiN) from Escherichia coli O157:H7.